Here is a 316-residue protein sequence, read N- to C-terminus: RING finger protein 148 (316 aa).

A signal peptide spans 1-12; the sequence is MLLCVSCLSVNG. Residue N56 is glycosylated (N-linked (GlcNAc...) asparagine). A PA domain is found at 84–178; the sequence is VSGAVVLPEG…GNLKGMELLH (95 aa). 2 consecutive transmembrane segments (helical) span residues 173-193 and 204-224; these read GMEL…IEVG and VMSL…YCAW. The RING-type; atypical zinc finger occupies 269–310; it reads CVVCFDMYKAQDVIRILTCKHFFHKTCIDPWLLAHRTCPMCK.

It is found in the membrane. This Mus musculus (Mouse) protein is RING finger protein 148 (Rnf148).